Reading from the N-terminus, the 458-residue chain is Elongation factor 1-alpha (458 aa).

Position 2 is a n,N,N-trimethylglycine; by EFM7 (glycine 2). Lysine 3 carries the post-translational modification N6,N6-dimethyllysine; by EFM7; alternate. The residue at position 3 (lysine 3) is an N6-methyllysine; by EFM7; alternate. The 236-residue stretch at 5 to 240 folds into the tr-type G domain; it reads KSHINVVVIG…DAIEQPSRPT (236 aa). Positions 14-21 are G1; sequence GHVDSGKS. Position 18 is a phosphoserine (serine 18). GTP is bound by residues serine 21 and threonine 22. Position 30 is an N6-methyllysine; by EFM1 (lysine 30). The segment at 70 to 74 is G2; the sequence is GITID. Residue threonine 72 is modified to Phosphothreonine. Lysine 79 carries the post-translational modification N6,N6,N6-trimethyllysine; by EFM5. Residue threonine 82 is modified to Phosphothreonine. Residues 91–94 form a G3 region; it reads DAPG. GTP is bound by residues asparagine 153, lysine 154, and aspartate 156. Positions 153-156 are G4; it reads NKMD. Residue serine 163 is modified to Phosphoserine. Residues serine 192, glycine 193, and tryptophan 194 each contribute to the GTP site. Residues 192–194 form a G5 region; sequence SGW. Residues lysine 224, lysine 242, and lysine 253 each participate in a glycyl lysine isopeptide (Lys-Gly) (interchain with G-Cter in ubiquitin) cross-link. The residue at position 259 (threonine 259) is a Phosphothreonine. Residue lysine 271 forms a Glycyl lysine isopeptide (Lys-Gly) (interchain with G-Cter in ubiquitin) linkage. Serine 289 is modified (phosphoserine). The residue at position 316 (lysine 316) is an N6,N6-dimethyllysine; by EFM4; alternate. Position 316 is an N6-methyllysine; by EFM4; alternate (lysine 316). Lysine 390 is subject to N6-methyllysine; by EFM6. A Glycyl lysine isopeptide (Lys-Gly) (interchain with G-Cter in ubiquitin) cross-link involves residue lysine 393. The residue at position 414 (serine 414) is a Phosphoserine. Threonine 430 bears the Phosphothreonine mark. Lysine 437 participates in a covalent cross-link: Glycyl lysine isopeptide (Lys-Gly) (interchain with G-Cter in ubiquitin). Lysine 458 carries the lysine methyl ester modification.

The protein belongs to the TRAFAC class translation factor GTPase superfamily. Classic translation factor GTPase family. EF-Tu/EF-1A subfamily. The eukaryotic elongation factor 1 complex (eEF1) is probably a heterohexamer. Two trimeric complexes, each composed of eEF1A (TEF1 or TEF2), eEF1Balpha (EFB1) and eEF1Bgamma (CAM1 or TEF4), are probably dimerized via the eF1Bgamma subunits. Interacts with eEF1Balpha; the interaction is direct. Interacts with GCN2 (via C-terminus); this interaction is direct, occurs in amino acid-repleted cells, may be stabilized in a ribosome-dependent manner, reduces GCN2-mediated eIF-2-alpha phosphorylation and is lost in amino acid-starved cells and by uncharged tRNAs. Interacts with CEX1. Interacts with elongation factor 3 (YEF3 or HEF3). Interacts with NAP1. Interacts with SRV2. Interacts with chaperone ZPR1; the interaction is required for its proper folding. Binds to actin and forms a ternary complex with BNI1 and profilin. Interacts with the proteasome, probably via RPT1. Associates with ribosomes. S-thiolated in response to oxidative stress, probably inhibiting the protein and causing a reduction in protein synthesis. In terms of processing, glutaminylated at Glu-45. An L-glutamine is linked to Glu-45 via the alpha amino group. This glutaminylation is yeast-specific and not essential for the normal functions of eEF1A. However, eEF1A glutaminylation slightly reduced growth under antibiotic-induced translational stress conditions.

It is found in the cytoplasm. It localises to the cytoskeleton. Its pathway is protein biosynthesis; polypeptide chain elongation. With respect to regulation, inhibited by narciclasine. In terms of biological role, GTP-binding component of the eukaryotic elongation factor 1 complex (eEF1). In its active GTP-bound form, binds to and delivers aminoacyl-tRNA to the A-site of ribosomes during protein biosynthesis. In the presence of a correct codon-anticodon match between the aminoacyl-tRNA and the A-site codon of the ribosome-bound mRNA, the ribosome acts as a GTPase activator and the GTP is hydrolyzed. The inactive GDP-bound form leaves the ribosome and must be recycled by its guanine nucleotide exchange factor (GEF) (eEF1B subcomplex) before binding another molecule of aminoacyl-tRNA. Required for nuclear export of aminoacyl-tRNAs. May also be involved in translational quality control by targeting cotranslationally damaged proteins to the proteasome. Also exhibits actin filament-binding and -bundling activities and is involved in cytoskeleton organization. Plays a role as a negative regulator of GCN2 kinase activity by inhibiting GCN2-mediated eIF-2-alpha phosphorylation in amino acid-repleted cells. The chain is Elongation factor 1-alpha (TEF1) from Saccharomyces cerevisiae (strain ATCC 204508 / S288c) (Baker's yeast).